Consider the following 386-residue polypeptide: DNA-directed RNA polymerase subunit Rpo1C (386 aa).

Belongs to the RNA polymerase beta' chain family. In terms of assembly, part of the RNA polymerase complex.

It localises to the cytoplasm. The catalysed reaction is RNA(n) + a ribonucleoside 5'-triphosphate = RNA(n+1) + diphosphate. Its function is as follows. DNA-dependent RNA polymerase (RNAP) catalyzes the transcription of DNA into RNA using the four ribonucleoside triphosphates as substrates. Forms part of the jaw domain. This Methanococcus maripaludis (strain C6 / ATCC BAA-1332) protein is DNA-directed RNA polymerase subunit Rpo1C.